The primary structure comprises 1318 residues: Ubiquitin carboxyl-terminal hydrolase 19 (1318 aa).

Residues 1-109 (MSGGASATGP…GACEDPHDLL (109 aa)) are disordered. Topologically, residues 1 to 1291 (MSGGASATGP…TTPDEGCLRY (1291 aa)) are cytoplasmic. The span at 28 to 44 (DRANQESKDGDPRKETG) shows a compositional bias: basic and acidic residues. Polar residues predominate over residues 83–94 (PSSSGSASTPQE). Residues 95 to 107 (EQTKEGACEDPHD) show a composition bias toward basic and acidic residues. A CS 1 domain is found at 113 to 202 (TPELLLDWRQ…VPMLTWPSLL (90 aa)). Residues 234–255 (KAVPPGNDPVSPAMVRSRNPGK) form a disordered region. Residue Ser-244 is modified to Phosphoserine. Residues 282 to 384 (LAFVKNDSYE…RQSQRWGGLE (103 aa)) enclose the CS 2 domain. Residues 390–479 (VGGAKVAVPT…PMPHSPVSGD (90 aa)) are disordered. 2 stretches are compositionally biased toward basic and acidic residues: residues 420–436 (EEARAVEKDKSKARSED) and 447–457 (PMEHVTPKPET). The USP domain occupies 497-1214 (TGLVNLGNTC…YAYVLFYRRR (718 aa)). Cys-506 (nucleophile) is an active-site residue. Zn(2+) is bound by residues Cys-791, Cys-794, Cys-808, Cys-811, Cys-817, Cys-821, His-829, and Cys-833. An MYND-type zinc finger spans residues 791–833 (CAACQRKQQSEDEKLKRCTRCYRVGYCNQLCQKTHWPDHKGLC). The Proton acceptor role is filled by His-1165. Over residues 1218–1232 (VERPPRAGHSEHHPD) the composition is skewed to basic and acidic residues. The segment at 1218–1239 (VERPPRAGHSEHHPDLGPAAEA) is disordered. Residues 1292-1312 (FVLGTVAALVALVLNVFYPLV) traverse the membrane as a helical segment. Over 1313–1318 (SQSRWR) the chain is Lumenal.

Belongs to the peptidase C19 family. Interacts with RNF123. Interacts with BIRC2/c-IAP1, BIRC3/c-IAP2 and XIAP/BIRC4. Interacts with HIF1A (via N-terminus). Interacts (via N-terminus) with HSP90AA1; this interaction activates the deubiquitinase activity of USP19.

The protein localises to the endoplasmic reticulum membrane. The catalysed reaction is Thiol-dependent hydrolysis of ester, thioester, amide, peptide and isopeptide bonds formed by the C-terminal Gly of ubiquitin (a 76-residue protein attached to proteins as an intracellular targeting signal).. Functionally, deubiquitinating enzyme that regulates the degradation of various proteins by removing ubiquitin moieties, thereby preventing their proteasomal degradation. Stabilizes RNF123, which promotes CDKN1B degradation and contributes to cell proliferation. Decreases the levels of ubiquitinated proteins during skeletal muscle formation and acts to repress myogenesis. Modulates transcription of major myofibrillar proteins. Also involved in turnover of endoplasmic-reticulum-associated degradation (ERAD) substrates. Mechanistically, deubiquitinates and thereby stabilizes several E3 ligases involved in the ERAD pathway including SYVN1 or MARCHF6. Regulates the stability of other E3 ligases including BIRC2/c-IAP1 and BIRC3/c-IAP2 by preventing their ubiquitination. Required for cells to mount an appropriate response to hypoxia by rescuing HIF1A from degradation in a non-catalytic manner and by mediating the deubiquitination of FUNDC1. Attenuates mitochondrial damage and ferroptosis by targeting and stabilizing NADPH oxidase 4/NOX4. Negatively regulates TNF-alpha- and IL-1beta-triggered NF-kappa-B activation by hydrolyzing 'Lys-27'- and 'Lys-63'-linked polyubiquitin chains from MAP3K7. Modulates also the protein level and aggregation of polyQ-expanded huntingtin/HTT through HSP90AA1. The sequence is that of Ubiquitin carboxyl-terminal hydrolase 19 (USP19) from Homo sapiens (Human).